The sequence spans 593 residues: NADH-quinone oxidoreductase subunit C/D 1 (593 aa).

The tract at residues 1 to 193 (MPWAKEGDLQ…DNLEGLMNYD (193 aa)) is NADH dehydrogenase I subunit C. The tract at residues 217–593 (AQIVLNWGPL…IDPVVGETDR (377 aa)) is NADH dehydrogenase I subunit D.

The protein in the N-terminal section; belongs to the complex I 30 kDa subunit family. It in the C-terminal section; belongs to the complex I 49 kDa subunit family. In terms of assembly, NDH-1 is composed of 13 different subunits. Subunits NuoB, CD, E, F, and G constitute the peripheral sector of the complex.

The protein localises to the cell inner membrane. It catalyses the reaction a quinone + NADH + 5 H(+)(in) = a quinol + NAD(+) + 4 H(+)(out). NDH-1 shuttles electrons from NADH, via FMN and iron-sulfur (Fe-S) centers, to quinones in the respiratory chain. The immediate electron acceptor for the enzyme in this species is believed to be ubiquinone. Couples the redox reaction to proton translocation (for every two electrons transferred, four hydrogen ions are translocated across the cytoplasmic membrane), and thus conserves the redox energy in a proton gradient. The sequence is that of NADH-quinone oxidoreductase subunit C/D 1 (nuoC1) from Aquifex aeolicus (strain VF5).